We begin with the raw amino-acid sequence, 447 residues long: Na(+)-translocating NADH-quinone reductase subunit A (447 aa).

This sequence belongs to the NqrA family. Composed of six subunits; NqrA, NqrB, NqrC, NqrD, NqrE and NqrF.

It carries out the reaction a ubiquinone + n Na(+)(in) + NADH + H(+) = a ubiquinol + n Na(+)(out) + NAD(+). Its function is as follows. NQR complex catalyzes the reduction of ubiquinone-1 to ubiquinol by two successive reactions, coupled with the transport of Na(+) ions from the cytoplasm to the periplasm. NqrA to NqrE are probably involved in the second step, the conversion of ubisemiquinone to ubiquinol. This Hahella chejuensis (strain KCTC 2396) protein is Na(+)-translocating NADH-quinone reductase subunit A.